The following is a 280-amino-acid chain: Polyamine aminopropyltransferase (280 aa).

The PABS domain maps to 3-237; sequence DVYFMERDPY…YWWSFSVGSK (235 aa). Residue Q33 participates in S-methyl-5'-thioadenosine binding. Spermidine-binding residues include H64 and D88. Residues D108 and 139–140 each bind S-methyl-5'-thioadenosine; that span reads DG. The Proton acceptor role is filled by D157. 157 to 160 contributes to the spermidine binding site; sequence DSTD.

The protein belongs to the spermidine/spermine synthase family. Homodimer or homotetramer.

The protein resides in the cytoplasm. It catalyses the reaction S-adenosyl 3-(methylsulfanyl)propylamine + putrescine = S-methyl-5'-thioadenosine + spermidine + H(+). It functions in the pathway amine and polyamine biosynthesis; spermidine biosynthesis; spermidine from putrescine: step 1/1. In terms of biological role, catalyzes the irreversible transfer of a propylamine group from the amino donor S-adenosylmethioninamine (decarboxy-AdoMet) to putrescine (1,4-diaminobutane) to yield spermidine. This chain is Polyamine aminopropyltransferase, found in Hydrogenobaculum sp. (strain Y04AAS1).